Reading from the N-terminus, the 610-residue chain is Ecto-NOX disulfide-thiol exchanger 2 (610 aa).

One can recognise an RRM domain in the interval 128–207 (KTVFVGGLPE…GRLHVDFAQA (80 aa)). Coiled coils occupy residues 293–328 (IQSA…LSGI) and 381–505 (RREE…KESC).

It belongs to the ENOX family. Cu cation is required as a cofactor. Glycosylated. Found in the sera of cancer patients with a wide variety of cancers including breast, prostate, lung and ovarian cancers, leukemias, and lymphomas. Not found in the serum of healthy volunteers or patients with disorders other than cancer. Probably shed into serum by cancer cells. Found on the cell borders of renal, kidney and ovarian carcinomas but not on the borders of surrounding non-cancerous stromal cells.

Its subcellular location is the cell membrane. It localises to the secreted. The protein localises to the extracellular space. Its activity is regulated as follows. Inhibited by the antitumor sulfonylurea LY181984, the vabilloid capsaicin, and retinoids. In terms of biological role, may be involved in cell growth. Probably acts as a terminal oxidase of plasma electron transport from cytosolic NAD(P)H via hydroquinones to acceptors at the cell surface. Hydroquinone oxidase activity alternates with a protein disulfide-thiol interchange/oxidoreductase activity which may control physical membrane displacements associated with vesicle budding or cell enlargement. The activities oscillate with a period length of 22 minutes and play a role in control of the ultradian cellular biological clock. This is Ecto-NOX disulfide-thiol exchanger 2 (ENOX2) from Homo sapiens (Human).